A 1149-amino-acid chain; its full sequence is Beta-alanine-activating enzyme (1149 aa).

ATP-binding positions include Thr-178–Lys-186, Asp-408, Arg-422, and Lys-543. Positions Ala-570–Thr-646 constitute a Carrier domain. Ser-605 is modified (O-(pantetheine 4'-phosphoryl)serine). The disordered stretch occupies residues Pro-653 to Ser-683.

This sequence belongs to the ATP-dependent AMP-binding enzyme family.

Functionally, covalently binds beta-alanine in an ATP-dependent manner to form a thioester bond with its phosphopantetheine group and transfers it to an, as yet, unknown acceptor. May be required for a post-translational protein modification or for post-transcriptional modification of an RNA. In Danio rerio (Zebrafish), this protein is Beta-alanine-activating enzyme (aasdh).